The chain runs to 645 residues: MYFPSWLSQLYRGLSRPIRRTTQPIWGSLYRSLLQSSQRRIPEFSSFVVRTNTCGELRSSHLGQEVTLCGWIQYRRQNTFLVLRDFDGLVQVIIPQDESAASVKKILCEAPVESVVQVSGTVISRPAGQENPKMPTGEIEIKVKTAELLNACKKLPFEIKNFVKKTEALRLQYRYLDLRSFQMQYNLRLRSQMVMKMREYLCNLHGFVDIETPTLFKRTPGGAKEFLVPSREPGKFYSLPQSPQQFKQLLMVGGLDRYFQVARCYRDEGSRPDRQPEFTQIDIEMSFVDQTGIQSLIEGLLQYSWPNDKDPVVVPFPTMTFAEVLATYGTDKPDTRFGMKIIDISDVFRNTEIGFLQDALSKPHGTVKAICIPEGAKYLKRKDIESIRNFAADHFNQEILPVFLNANRNWNSPVANFIMESQRLELIRLMETQEEDVVLLTAGEHNKACSLLGKLRLECADLLETRGVVLRDPTLFSFLWVVDFPLFLPKEENPRELESAHHPFTAPHPSDIHLLYTEPKKARSQHYDLVLNGNEIGGGSIRIHNAELQRYILATLLKEDVKMLSHLLQALDYGAPPHGGIALGLDRLICLVTGSPSIRDVIAFPKSFRGHDLMSNTPDSVPPEELKPYHIRVSKPTDSKAERAH.

The N-terminal 47 residues, 1-47, are a transit peptide targeting the mitochondrion; the sequence is MYFPSWLSQLYRGLSRPIRRTTQPIWGSLYRSLLQSSQRRIPEFSSF. T219 is modified (phosphothreonine). Position 242 is a phosphoserine (S242). An aspartate region spans residues 244-247; that stretch reads QQFK. L-aspartate is bound at residue R266. 266–268 is a binding site for ATP; sequence RDE. K382 carries the N6-acetyllysine modification. E535 lines the ATP pocket. An L-aspartate-binding site is contributed by R542. 584 to 587 serves as a coordination point for ATP; the sequence is GLDR.

Belongs to the class-II aminoacyl-tRNA synthetase family. Type 1 subfamily. Homodimer.

It localises to the mitochondrion matrix. Its subcellular location is the mitochondrion membrane. It carries out the reaction tRNA(Asp) + L-aspartate + ATP = L-aspartyl-tRNA(Asp) + AMP + diphosphate. In terms of biological role, catalyzes the attachment of aspartate to tRNA(Asp) in a two-step reaction: aspartate is first activated by ATP to form Asp-AMP and then transferred to the acceptor end of tRNA(Asp). This chain is Aspartate--tRNA ligase, mitochondrial (DARS2), found in Homo sapiens (Human).